The primary structure comprises 117 residues: UPF0342 protein lmo2223 (117 aa).

Belongs to the UPF0342 family.

In Listeria monocytogenes serovar 1/2a (strain ATCC BAA-679 / EGD-e), this protein is UPF0342 protein lmo2223.